The sequence spans 117 residues: Large ribosomal subunit protein bL20c (117 aa).

This sequence belongs to the bacterial ribosomal protein bL20 family.

Its subcellular location is the plastid. The protein resides in the chloroplast. In terms of biological role, binds directly to 23S ribosomal RNA and is necessary for the in vitro assembly process of the 50S ribosomal subunit. It is not involved in the protein synthesizing functions of that subunit. The sequence is that of Large ribosomal subunit protein bL20c from Carica papaya (Papaya).